We begin with the raw amino-acid sequence, 492 residues long: 2,3-bisphosphoglycerate-independent phosphoglycerate mutase (492 aa).

Mn(2+) is bound by residues D11 and S61. The Phosphoserine intermediate role is filled by S61. Residues H118, 147-148 (RD), R178, R184, 248-251 (RNDR), and K320 each bind substrate. Residues D386, H390, D427, H428, and H445 each contribute to the Mn(2+) site.

Belongs to the BPG-independent phosphoglycerate mutase family. In terms of assembly, monomer. The cofactor is Mn(2+).

It catalyses the reaction (2R)-2-phosphoglycerate = (2R)-3-phosphoglycerate. It participates in carbohydrate degradation; glycolysis; pyruvate from D-glyceraldehyde 3-phosphate: step 3/5. Catalyzes the interconversion of 2-phosphoglycerate and 3-phosphoglycerate. The sequence is that of 2,3-bisphosphoglycerate-independent phosphoglycerate mutase from Campylobacter jejuni subsp. jejuni serotype O:6 (strain 81116 / NCTC 11828).